Reading from the N-terminus, the 210-residue chain is NADH dehydrogenase [ubiquinone] iron-sulfur protein 8, mitochondrial (210 aa).

Residues 1-34 (MRCLTTPMLLRALAQAARAGPPCGRSLHSSAVAA) constitute a mitochondrion transit peptide. 4Fe-4S ferredoxin-type domains follow at residues 102–131 (RRYP…IEAE) and 141–170 (TRYD…EGPN). [4Fe-4S] cluster is bound by residues Cys-111, Cys-114, Cys-117, Cys-121, Cys-150, Cys-153, Cys-156, and Cys-160.

Belongs to the complex I 23 kDa subunit family. Core subunit of respiratory chain NADH dehydrogenase (Complex I) which is composed of 45 different subunits. This is a component of the iron-sulfur (IP) fragment of the enzyme. Interacts with RAB5IF. [4Fe-4S] cluster is required as a cofactor.

It localises to the mitochondrion inner membrane. The enzyme catalyses a ubiquinone + NADH + 5 H(+)(in) = a ubiquinol + NAD(+) + 4 H(+)(out). Functionally, core subunit of the mitochondrial membrane respiratory chain NADH dehydrogenase (Complex I) which catalyzes electron transfer from NADH through the respiratory chain, using ubiquinone as an electron acceptor. Essential for the catalytic activity and assembly of complex I. This Pongo abelii (Sumatran orangutan) protein is NADH dehydrogenase [ubiquinone] iron-sulfur protein 8, mitochondrial (NDUFS8).